The sequence spans 405 residues: Chalcone synthase (405 aa).

Cysteine 170 is an active-site residue.

This sequence belongs to the thiolase-like superfamily. Chalcone/stilbene synthases family.

It carries out the reaction (E)-4-coumaroyl-CoA + 3 malonyl-CoA + 3 H(+) = 2',4,4',6'-tetrahydroxychalcone + 3 CO2 + 4 CoA. Its pathway is secondary metabolite biosynthesis; flavonoid biosynthesis. Its function is as follows. The primary product of this enzyme is 4,2',4',6'-tetrahydroxychalcone (also termed naringenin-chalcone or chalcone) which can under specific conditions spontaneously isomerize into naringenin. This chain is Chalcone synthase (CHS), found in Equisetum arvense (Field horsetail).